Reading from the N-terminus, the 258-residue chain is Regulatory protein RecX (258 aa).

It belongs to the RecX family.

The protein resides in the cytoplasm. Functionally, modulates RecA activity. This is Regulatory protein RecX from Streptococcus pyogenes serotype M2 (strain MGAS10270).